The chain runs to 125 residues: Small ribosomal subunit protein uS12m (125 aa).

Belongs to the universal ribosomal protein uS12 family.

The protein resides in the mitochondrion. Functionally, protein S12 is involved in the translation initiation step. This is Small ribosomal subunit protein uS12m (RPS12) from Helianthus annuus (Common sunflower).